Here is a 930-residue protein sequence, read N- to C-terminus: MKLKDTLNLGKTAFPMRAGLPTKEPVWQKEWEDAKLYQRRQELNEGKPHFVLHDGPPYANGNIHVGHAMNHISKDIIIRSKSMSGFNAPYIPGWDTHGLPIEQVLAKQGVKRKEMDLVEYLKLCREYALSQVYKQRDDFKRLGMSGDWENLYVTLTPDYEAAQIRVFGEMANKGYIYRGAKPVYWSWSSESALAEAEIEYHDLVSTSLYYANKVKDGKGILDTDTYIVVWTTTPFTITASRGLTVGADIDYVLVQPASETRKFVVAAELLTSLSEKFGWADVQVLATYRGQELNHIVTEHPWDTAVDELVILGDHVTTDSGTGIVHTAPGFGEDDYNVGIANGLEVAVTVDERGIMMANAGPEFEGQFYDKVVPTVIEKLGNLLLAQEEISHSYPFDWRTKKPIIWRAVPQWFASVSKFRQEILDAIDKVKFHTEWGKVRLYNMIRDRGDWVISRQRAWGVPLPIFYAEDGTAIMTAETIEHVAQLFEVHGSSIWWERDAKNLLPEGFTHPGSPNGEFKKETDIMDVWFDSGSSWNGVLVNRPNLTYPADLYLEGSDQYRGWFNSSLITSVANHGVAPYKQILSQGFTLDGKGEKMSKSLGNTIAPSDVEKQFGAEILRLWVTSVDSSNDVRISMDILSQVSETYRKIRNTLRFLIANTSDFNPAQDVVAYDELRSVDKYMTIRFNQLVKTIRDAYADFEFLTIYKALVNFINVDLSAFYLDFAKDVVYIEGAKSLERRQMQTVFYDILVKITKLLTPILPHTAEEIWSYLEFEAEDFVQLSELPEAQTFANQEEVLDTWAAFMDFRGQAQKALEEARNAKVIGKSLEAHLTVYPNEVVKTLLEAVNSNVAQLLIVSDLTIAEGPAPEAAVSFEDVAFTVERAAGQVCDRCRRIDPTTAERSYQAVICDHCASIVEENFAEAVAEGFEEK.

The 'HIGH' region motif lies at 57 to 67 (PYANGNIHVGH). Glu-554 contacts L-isoleucyl-5'-AMP. The 'KMSKS' region motif lies at 595-599 (KMSKS). Lys-598 is a binding site for ATP. The Zn(2+) site is built by Cys-888, Cys-891, Cys-908, and Cys-911.

This sequence belongs to the class-I aminoacyl-tRNA synthetase family. IleS type 1 subfamily. In terms of assembly, monomer. It depends on Zn(2+) as a cofactor.

Its subcellular location is the cytoplasm. The catalysed reaction is tRNA(Ile) + L-isoleucine + ATP = L-isoleucyl-tRNA(Ile) + AMP + diphosphate. Catalyzes the attachment of isoleucine to tRNA(Ile). As IleRS can inadvertently accommodate and process structurally similar amino acids such as valine, to avoid such errors it has two additional distinct tRNA(Ile)-dependent editing activities. One activity is designated as 'pretransfer' editing and involves the hydrolysis of activated Val-AMP. The other activity is designated 'posttransfer' editing and involves deacylation of mischarged Val-tRNA(Ile). The polypeptide is Isoleucine--tRNA ligase (Streptococcus pneumoniae (strain P1031)).